The chain runs to 258 residues: MAVNVYSTSVTSDNLSRHDMLAWINESLQLTLTKIEQLCSGAAYCQFMDMLFPGSVALKKVKFQAKLEHEYIQNFKVLQAGFKRMGVDKIIPVDKLVKGKFQDNFEFVQWFKKFFDANYDGKEYDPVAARQGQETVAPNLVAPVVNKPKKPLAPQRPIVAQRTPATPKGSTGMVKKAAGDDESAGLIEQINVLKLTVEDLEKERDFYFGKLRNIELICQENEGENDPVLQRIVEILYATDEGFVIPDEGAPQEEQEEY.

Residues 14-116 form the Calponin-homology (CH) domain; the sequence is NLSRHDMLAW…FVQWFKKFFD (103 aa). The EB1 C-terminal domain occupies 175–245; the sequence is KKAAGDDESA…LYATDEGFVI (71 aa).

The protein belongs to the MAPRE family.

Its subcellular location is the cytoplasm. The protein resides in the cytoskeleton. It localises to the microtubule organizing center. It is found in the centrosome. The protein localises to the golgi apparatus. Its subcellular location is the spindle. The protein resides in the spindle pole. Its function is as follows. Plus-end tracking protein (+TIP) that binds to the plus-end of microtubules and regulates the dynamics of the microtubule cytoskeleton. Promotes cytoplasmic microtubule nucleation and elongation. Involved in mitotic spindle positioning by stabilizing microtubules and promoting dynamic connection between astral microtubules and the cortex during mitotic chromosome segregation. The polypeptide is Microtubule-associated protein RP/EB family member 1 (MAPRE1) (Gallus gallus (Chicken)).